The sequence spans 215 residues: MOB kinase activator-like 1B (215 aa).

The segment at 1–29 (MSLFGLGSRNQKTFRPKKSAPTGSKGAQL) is disordered. Residues C80, C85, H162, and H167 each coordinate Zn(2+).

The protein belongs to the MOB1/phocein family. In terms of tissue distribution, constitutively expressed with higher expression in roots, flowers and pods than in leaves and stems.

The protein localises to the cytoplasm. The protein resides in the cytoskeleton. It localises to the phragmoplast. In Medicago sativa subsp. falcata (Sickle medic), this protein is MOB kinase activator-like 1B.